We begin with the raw amino-acid sequence, 860 residues long: Leucine--tRNA ligase (860 aa).

Positions 73–83 (VLQPIGWDAFG) match the 'HIGH' region motif. The 'KMSKS' region motif lies at 650-654 (SPADM). Aspartate 653 contacts ATP.

It belongs to the class-I aminoacyl-tRNA synthetase family.

Its subcellular location is the cytoplasm. The catalysed reaction is tRNA(Leu) + L-leucine + ATP = L-leucyl-tRNA(Leu) + AMP + diphosphate. This chain is Leucine--tRNA ligase, found in Shigella flexneri.